Reading from the N-terminus, the 463-residue chain is Kynureninase 2 (463 aa).

Pyridoxal 5'-phosphate is bound by residues leucine 134, threonine 135, 162-165, aspartate 247, histidine 250, and tyrosine 272; that span reads FPSD. At lysine 273 the chain carries N6-(pyridoxal phosphate)lysine. Positions 312 and 340 each coordinate pyridoxal 5'-phosphate.

The protein belongs to the kynureninase family. Homodimer. It depends on pyridoxal 5'-phosphate as a cofactor.

It is found in the cytoplasm. It carries out the reaction L-kynurenine + H2O = anthranilate + L-alanine + H(+). The catalysed reaction is 3-hydroxy-L-kynurenine + H2O = 3-hydroxyanthranilate + L-alanine + H(+). It participates in amino-acid degradation; L-kynurenine degradation; L-alanine and anthranilate from L-kynurenine: step 1/1. It functions in the pathway cofactor biosynthesis; NAD(+) biosynthesis; quinolinate from L-kynurenine: step 2/3. Functionally, catalyzes the cleavage of L-kynurenine (L-Kyn) and L-3-hydroxykynurenine (L-3OHKyn) into anthranilic acid (AA) and 3-hydroxyanthranilic acid (3-OHAA), respectively. This chain is Kynureninase 2 (bna5-2), found in Aspergillus terreus (strain NIH 2624 / FGSC A1156).